The chain runs to 358 residues: Glutamine synthetase (358 aa).

Residues 25-104 enclose the GS beta-grasp domain; sequence VQAEYIWIDA…VLCECYDNDG (80 aa). Residues 111–358 enclose the GS catalytic domain; that stretch reads YRAHCKKVMD…ILVETTVLNN (248 aa).

This sequence belongs to the glutamine synthetase family. Homooctamer.

The protein localises to the cytoplasm. The catalysed reaction is L-glutamate + NH4(+) + ATP = L-glutamine + ADP + phosphate + H(+). This is Glutamine synthetase (GLN1) from Cryptococcus neoformans var. neoformans serotype D (strain B-3501A) (Filobasidiella neoformans).